Consider the following 598-residue polypeptide: Ecto-NOX disulfide-thiol exchanger 2 (598 aa).

In terms of domain architecture, RRM spans 99 to 178; sequence KTVFVGGLPE…GRLHVDFAQA (80 aa). 2 coiled-coil regions span residues 264 to 299 and 352 to 476; these read IQSANSHVRRLVNEKATHEKEMEEAKEKFKQALSGI and RREE…KQEN.

Belongs to the ENOX family. Requires Cu cation as cofactor. In terms of processing, glycosylated.

The protein resides in the cell membrane. It localises to the secreted. The protein localises to the extracellular space. Inhibited by the antitumor sulfonylurea LY181984, the vabilloid capsaicin, and retinoids. In terms of biological role, may be involved in cell growth. Probably acts as a terminal oxidase of plasma electron transport from cytosolic NAD(P)H via hydroquinones to acceptors at the cell surface. Hydroquinone oxidase activity alternates with a protein disulfide-thiol interchange/oxidoreductase activity which may control physical membrane displacements associated with vesicle budding or cell enlargement. The activities oscillate with a period length of 22 minutes and play a role in control of the ultradian cellular biological clock. The sequence is that of Ecto-NOX disulfide-thiol exchanger 2 (Enox2) from Mus musculus (Mouse).